Here is a 639-residue protein sequence, read N- to C-terminus: Pheromone B alpha 1 receptor (639 aa).

Helical transmembrane passes span 8 to 28 (LFPIFAFLGFVLAILPLPWHL), 37 to 57 (FFMMWTALGCLNQFINSVAWA), 70 to 90 (ISIRILMGASVGIPASSLCII), 113 to 133 (ILVDALICVLFPLVYIALQYI), 163 to 183 (VWPVLLGLISATYGVMALLQF), 209 to 229 (MALALTEMMCTMPLGIFVIVL), and 272 to 292 (LTRWCAPVSAFIFFFYFGFAE). Disordered regions lie at residues 375–416 (PRPM…SSPI), 490–516 (TVPHHSTADEPASPALPDTPSSCSSSA), 532–563 (SADVTRRDSGSSAGGVASTSRPTRAGPPRLPS), and 611–639 (TTAGAPATTTPDRGEPDVPTSPRTHRASV). Residues 383–398 (SSSGFSSSDSTRFGSS) show a composition bias toward low complexity. Composition is skewed to low complexity over residues 541–551 (GSSAGGVASTS) and 611–621 (TTAGAPATTTP).

The protein belongs to the G-protein coupled receptor 4 family.

It localises to the membrane. Its function is as follows. Receptor for the BAP1 pheromone, a prenylated mating factor. Has a role in the initiation of B-regulated nuclear migration. The chain is Pheromone B alpha 1 receptor (BAR1) from Schizophyllum commune (Split gill fungus).